The following is a 979-amino-acid chain: Putative disease resistance protein RGA1 (979 aa).

Residues 143-437 (GSVLTEPQVY…MAHGFLLSKG (295 aa)) enclose the NB-ARC domain. 182–189 (GMGGLGKT) serves as a coordination point for ATP. 12 LRR repeats span residues 524–547 (FVSLRVLNLRNSNLNQLPSSIGDL), 549–570 (HLRYLDLSGNFRIRNLPKRLCK), 571–594 (LQNLQTLDLHYCDSLSCLPKQTSK), 595–619 (LGSLRNLLLDGCSLTSTPPRIGLLT), 637–661 (LGELKNLNLYGSISITKLDRVKKDT), 748–773 (LPCLESLELHTGSADVEYVEDNVHPG), 823–841 (VKTLKVIVTDATVLRSISN), 842–866 (LRALTSLDISDNVEATSLPEEMFKS), 868–890 (ANLKYLKISFFRNLKELPTSLAS), 891–915 (LNALKSLKFEFCDALESLPEEGVKG), 917–939 (TSLTELSVSNCMMLKCLPEGLQH), and 940–965 (LTALTTLTITQCPIVFKRCERGIGED).

It belongs to the disease resistance NB-LRR family.

Disease resistance protein. Resistance proteins guard the plant against pathogens that contain an appropriate avirulence protein via a direct or indirect interaction with this avirulence protein. That triggers a defense system which restricts the pathogen growth. The protein is Putative disease resistance protein RGA1 (RGA1) of Solanum bulbocastanum (Wild potato).